Consider the following 1112-residue polypeptide: Glutamate receptor-interacting protein 1 (1112 aa).

Ser-43 carries the post-translational modification Phosphoserine. PDZ domains lie at 53-136 (VVEL…EYEL), 150-238 (TVEV…EYDV), 252-336 (LVEV…LPHH), 471-560 (EVVL…EFDV), 572-657 (HVKL…RKDE), and 672-754 (TVEL…KKQT). Disordered regions lie at residues 752–796 (KQTD…VYPS), 841–886 (KRAS…AEQE), and 922–963 (NHEA…DVGR). Residues 869 to 880 (STASGFAGASDS) are compositionally biased toward low complexity. The span at 928–958 (ARSQLGRQASFQERSNSRPHYSQTTRSNTLP) shows a compositional bias: polar residues. Residues 988 to 1070 (KVTLYKDSGM…KLDLVISRNP (83 aa)) enclose the PDZ 7 domain. Residues 1077-1112 (IEQPALPSDWSEQNSAFFQQPSHGGNLETREPTNTL) are disordered. Positions 1086-1099 (WSEQNSAFFQQPSH) are enriched in polar residues.

In terms of assembly, interacts with EFNB1, EPHA7, EPHB2, EFNB3, KIF5A, KIF5C, KIF5B and the C-terminal tail of PRLHR. Forms a ternary complex with GRIA2 and CSPG4. Can form homomultimers or heteromultimers with GRIP2. Interacts with GRIA2, GRIA3, GRIPAP1/GRASP1, PPFIA1, PPFIA4, FRAS1, PLCD4, PTPRF and liprins-alpha. Interacts with ATAD1 in an ATP-dependent manner. ATAD1-catalyzed ATP hydrolysis disrupts binding to ATAD1 and to GRIA2 and leads to AMPAR complex disassembly. Interacts with SLC30A9. Interacts with BUD23. Forms a complex with NSG1, GRIA2 and STX12; controls the intracellular fate of AMPAR and the endosomal sorting of the GRIA2 subunit toward recycling and membrane targeting. Interacts with NSG1. As to expression, expressed in brain, testis and retina. In brain highly expressed in the olfactory bulb, cortex and hippocampus and lower level in thalamus, cerebellum and spinal cord. In brain it is found in the perikaryon, dendrites, dendritic shafts, dendritic spines and, excitatory and inhibitory synapses of neurons. In retina, it is most abundant in the plexiform layers than in perikarya.

Its subcellular location is the cytoplasmic vesicle. The protein resides in the perikaryon. The protein localises to the cell projection. It is found in the dendrite. It localises to the cytoplasm. Its subcellular location is the endomembrane system. The protein resides in the postsynaptic cell membrane. The protein localises to the postsynaptic density. It is found in the endoplasmic reticulum membrane. In terms of biological role, may play a role as a localized scaffold for the assembly of a multiprotein signaling complex and as mediator of the trafficking of its binding partners at specific subcellular location in neurons. Through complex formation with NSG1, GRIA2 and STX12 controls the intracellular fate of AMPAR and the endosomal sorting of the GRIA2 subunit toward recycling and membrane targeting. This is Glutamate receptor-interacting protein 1 (Grip1) from Rattus norvegicus (Rat).